We begin with the raw amino-acid sequence, 192 residues long: Calcium-binding protein K (192 aa).

2 EF-hand domains span residues W60–A95 and P96–C131. Residues D73, D75, N77, E84, D109, D111, S113, Y115, and E120 each coordinate Ca(2+).

Belongs to the recoverin family.

This chain is Calcium-binding protein K (cbpK), found in Dictyostelium discoideum (Social amoeba).